A 327-amino-acid chain; its full sequence is Phenylalanine--tRNA ligase alpha subunit (327 aa).

Glu-252 is a Mg(2+) binding site.

It belongs to the class-II aminoacyl-tRNA synthetase family. Phe-tRNA synthetase alpha subunit type 1 subfamily. In terms of assembly, tetramer of two alpha and two beta subunits. It depends on Mg(2+) as a cofactor.

The protein resides in the cytoplasm. The enzyme catalyses tRNA(Phe) + L-phenylalanine + ATP = L-phenylalanyl-tRNA(Phe) + AMP + diphosphate + H(+). The chain is Phenylalanine--tRNA ligase alpha subunit from Pectobacterium carotovorum subsp. carotovorum (strain PC1).